A 287-amino-acid polypeptide reads, in one-letter code: RNA polymerase sigma factor RpoH (287 aa).

The tract at residues L54 to R123 is sigma-70 factor domain-2. The Interaction with polymerase core subunit RpoC motif lies at D78–Q81. Positions A230–V283 are sigma-70 factor domain-4. A DNA-binding region (H-T-H motif) is located at residues L256–K275.

Belongs to the sigma-70 factor family. RpoH subfamily. As to quaternary structure, interacts with the RNA polymerase core enzyme.

The protein localises to the cytoplasm. Sigma factors are initiation factors that promote the attachment of RNA polymerase to specific initiation sites and are then released. This sigma factor is involved in regulation of expression of heat shock genes. The sequence is that of RNA polymerase sigma factor RpoH from Buchnera aphidicola subsp. Baizongia pistaciae (strain Bp).